Here is a 239-residue protein sequence, read N- to C-terminus: Ribosomal RNA small subunit methyltransferase G (239 aa).

Residues G77, F82, 128–129, and R146 each bind S-adenosyl-L-methionine; that span reads AE. A disordered region spans residues 215-239; that stretch reads DKRSQTPKKYPRKPGTPNKSPLLEK.

The protein belongs to the methyltransferase superfamily. RNA methyltransferase RsmG family.

The protein resides in the cytoplasm. Its function is as follows. Specifically methylates the N7 position of guanine in position 535 of 16S rRNA. This Staphylococcus saprophyticus subsp. saprophyticus (strain ATCC 15305 / DSM 20229 / NCIMB 8711 / NCTC 7292 / S-41) protein is Ribosomal RNA small subunit methyltransferase G.